Consider the following 1714-residue polypeptide: uncharacterized protein (1714 aa).

Disordered stretches follow at residues 47-70 (SVAG…SDDL) and 584-616 (KKTG…KSKK). ATP-binding positions include 607–614 (ATKESGKS) and 806–813 (APTSAGKT). Residues 607–616 (ATKESGKSKK) show a composition bias toward basic and acidic residues. Residues 793–963 (LDSVDRGNSA…WLNSSEQAKS (171 aa)) form the Helicase ATP-binding domain. Positions 913 to 916 (DEVH) match the DEVH box motif. A disordered region spans residues 1197 to 1223 (KRKRDDAEKKKKGDKDEDAGPEKDDDE). The segment covering 1199-1218 (KRDDAEKKKKGDKDEDAGPE) has biased composition (basic and acidic residues). Residues 1237-1391 (ALERFKLRGR…NPPFTVLFLL (155 aa)) form the Helicase C-terminal domain.

This sequence belongs to the helicase family. SKI2 subfamily.

Its subcellular location is the nucleus. This is an uncharacterized protein from Caenorhabditis elegans.